The following is a 906-amino-acid chain: Rho GTPase-activating protein gacJ (906 aa).

The interval 53 to 117 (LEGHLNPSSH…RDNSRSDNIR (65 aa)) is disordered. A compositionally biased stretch (low complexity) spans 69–79 (NNNNNNNNNNN). Basic and acidic residues predominate over residues 92–117 (SRSDSKHHNRENSKSDRDNSRSDNIR). The Rho-GAP domain maps to 161-348 (EELQSLYPDQ…YMLEYFNDIF (188 aa)). Disordered regions lie at residues 368–415 (DTTS…SRSK), 452–864 (EIIP…SVLT), and 877–906 (ANQA…NINK). Positions 381-404 (NGGSPRTSNTPYQQQHQLSSQSMA) are enriched in polar residues. Positions 461-487 (TTTTTTTTTNTTTTTTTTNTTPNNTTT) are enriched in low complexity. 2 stretches are compositionally biased toward pro residues: residues 494–510 (PVPP…PPNP) and 547–560 (QPPP…PSPP). Positions 565-574 (KPTSKSDFIP) are enriched in polar residues. 2 stretches are compositionally biased toward low complexity: residues 575-597 (STNN…SIPK) and 613-629 (IEEP…TTTT). The segment covering 637–649 (FKNNGTISSGSKS) has biased composition (polar residues). 2 stretches are compositionally biased toward low complexity: residues 650–663 (NPNL…NQPL) and 683–694 (SKPITTTPTIKK). Over residues 708–721 (PPSPSSSSPSPPHN) the composition is skewed to pro residues. 3 stretches are compositionally biased toward low complexity: residues 754–772 (PTIP…PTTP), 785–816 (PPIN…STPK), and 844–861 (SSPT…SSPS). Residues 880-890 (AKKNPLSNSGG) show a composition bias toward polar residues.

The protein localises to the cytoplasm. Functionally, rho GTPase-activating protein involved in the signal transduction pathway. In Dictyostelium discoideum (Social amoeba), this protein is Rho GTPase-activating protein gacJ (gacJ).